The primary structure comprises 883 residues: Putative GTP diphosphokinase RSH1, chloroplastic (883 aa).

Residues Met1–Val55 constitute a chloroplast transit peptide. The HD domain maps to Phe172–Met279. One can recognise a TGS domain in the interval Leu562–Thr625. A compositionally biased stretch (polar residues) spans Gln710–Ser726. The segment at Gln710–Asp746 is disordered. The region spanning Trp796–Ser867 is the ACT domain.

It belongs to the RelA/SpoT family. In terms of assembly, interacts with RPP5.

The protein localises to the plastid. It is found in the chloroplast. The enzyme catalyses GTP + ATP = guanosine 3'-diphosphate 5'-triphosphate + AMP. Functionally, may be involved in a rapid plant ppGpp (guanosine 3'-diphosphate 5'-diphosphate)-mediated response to pathogens and other stresses. The sequence is that of Putative GTP diphosphokinase RSH1, chloroplastic (RSH1) from Arabidopsis thaliana (Mouse-ear cress).